The chain runs to 119 residues: Ribonuclease P protein component (119 aa).

It belongs to the RnpA family. In terms of assembly, consists of a catalytic RNA component (M1 or rnpB) and a protein subunit.

It catalyses the reaction Endonucleolytic cleavage of RNA, removing 5'-extranucleotides from tRNA precursor.. In terms of biological role, RNaseP catalyzes the removal of the 5'-leader sequence from pre-tRNA to produce the mature 5'-terminus. It can also cleave other RNA substrates such as 4.5S RNA. The protein component plays an auxiliary but essential role in vivo by binding to the 5'-leader sequence and broadening the substrate specificity of the ribozyme. This chain is Ribonuclease P protein component, found in Yersinia enterocolitica serotype O:8 / biotype 1B (strain NCTC 13174 / 8081).